The chain runs to 431 residues: Phosphoribosylamine--glycine ligase (431 aa).

An ATP-grasp domain is found at 109–316 (KDFLARHGIP…LVDLLEAAID (208 aa)). An ATP-binding site is contributed by 135-196 (VREKGTPIVV…EEFLDGEEAS (62 aa)). Positions 286 and 288 each coordinate Mg(2+).

The protein belongs to the GARS family. The cofactor is Mg(2+). Mn(2+) is required as a cofactor.

It carries out the reaction 5-phospho-beta-D-ribosylamine + glycine + ATP = N(1)-(5-phospho-beta-D-ribosyl)glycinamide + ADP + phosphate + H(+). It participates in purine metabolism; IMP biosynthesis via de novo pathway; N(1)-(5-phospho-D-ribosyl)glycinamide from 5-phospho-alpha-D-ribose 1-diphosphate: step 2/2. This Xanthomonas axonopodis pv. citri (strain 306) protein is Phosphoribosylamine--glycine ligase.